Consider the following 182-residue polypeptide: Adenylate kinase (182 aa).

ATP is bound at residue 12–17 (GAGKGT). The tract at residues 32-61 (STGELLRKEIDLDTYLGKQVKDIMNKGELV) is NMP. Residues Thr33, Arg38, 59 to 61 (ELV), 85 to 88 (GYPR), and Gln92 contribute to the AMP site. Positions 126 to 132 (LRGRKDD) are LID. Arg127 contributes to the ATP binding site. AMP contacts are provided by Arg129 and Arg140. Position 168 (Gly168) interacts with ATP.

Belongs to the adenylate kinase family. In terms of assembly, monomer.

It localises to the cytoplasm. The enzyme catalyses AMP + ATP = 2 ADP. It functions in the pathway purine metabolism; AMP biosynthesis via salvage pathway; AMP from ADP: step 1/1. In terms of biological role, catalyzes the reversible transfer of the terminal phosphate group between ATP and AMP. Plays an important role in cellular energy homeostasis and in adenine nucleotide metabolism. This Prochlorococcus marinus (strain MIT 9515) protein is Adenylate kinase.